The chain runs to 1407 residues: DNA-directed RNA polymerase subunit beta' (1407 aa).

Zn(2+)-binding residues include Cys-70, Cys-72, Cys-85, and Cys-88. 3 residues coordinate Mg(2+): Asp-460, Asp-462, and Asp-464. Zn(2+) is bound by residues Cys-814, Cys-888, Cys-895, and Cys-898.

The protein belongs to the RNA polymerase beta' chain family. The RNAP catalytic core consists of 2 alpha, 1 beta, 1 beta' and 1 omega subunit. When a sigma factor is associated with the core the holoenzyme is formed, which can initiate transcription. Requires Mg(2+) as cofactor. Zn(2+) is required as a cofactor.

It catalyses the reaction RNA(n) + a ribonucleoside 5'-triphosphate = RNA(n+1) + diphosphate. Its function is as follows. DNA-dependent RNA polymerase catalyzes the transcription of DNA into RNA using the four ribonucleoside triphosphates as substrates. This chain is DNA-directed RNA polymerase subunit beta', found in Buchnera aphidicola subsp. Acyrthosiphon pisum (strain APS) (Acyrthosiphon pisum symbiotic bacterium).